Here is a 530-residue protein sequence, read N- to C-terminus: Copine-B (530 aa).

C2 domains are found at residues 1–125 and 130–253; these read MTTP…SEIK and ETGV…PLIN. Residues D25, D31, D85, D87, and D100 each coordinate Ca(2+). Positions 294-513 constitute a VWFA domain; sequence NLMVAIDCTA…ETLREIPQQL (220 aa).

It belongs to the copine family. Ca(2+) serves as cofactor.

The sequence is that of Copine-B (cpnB-1) from Dictyostelium discoideum (Social amoeba).